The following is a 386-amino-acid chain: Short-chain dehydrogenase/reductase family 42E member 1 (386 aa).

Tyr-150 functions as the Proton acceptor in the catalytic mechanism. Position 154 (Lys-154) interacts with NAD(+). 2 consecutive transmembrane segments (helical) span residues Phe-279–Ser-299 and Tyr-363–Pro-383.

It belongs to the 3-beta-HSD family.

It localises to the membrane. The protein is Short-chain dehydrogenase/reductase family 42E member 1 (sdr42e1) of Xenopus laevis (African clawed frog).